A 502-amino-acid polypeptide reads, in one-letter code: Hexose transporter 1 (502 aa).

Topologically, residues 1–26 (MKKSSKEISSSQSLKNGGSDHFFNTS) are cytoplasmic. A helical membrane pass occupies residues 27–47 (LMYVLAACLASFIFGYQVSVL). Residues 48–76 (NTIKNFIVIEFGWCTGNKVECDDSTLKSS) lie on the Extracellular side of the membrane. A disulfide bridge links C61 with C68. The chain crosses the membrane as a helical span at residues 77 to 97 (FLLASVFIGAVVGSGFSGYLV). Topologically, residues 98-102 (QHGRR) are cytoplasmic. A helical membrane pass occupies residues 103–123 (FSLLVIYNFFILVSILTSITH). Residues 124–132 (HFHTILFSR) lie on the Extracellular side of the membrane. Residues 133–153 (LLSGFGIGLITVSVPMYISEM) form a helical membrane-spanning segment. Residues 154 to 163 (THKDKKGAYG) are Cytoplasmic-facing. Residues 164–184 (VLHQLFITFGIFVAVLLGMAM) traverse the membrane as a helical segment. Q167 serves as a coordination point for alpha-D-glucose. Q167 provides a ligand contact to beta-D-glucose. Topologically, residues 185–205 (GEAPDAKSVDALGEFQKIWWR) are extracellular. Residues 206–226 (LMFFFPCLISILGIVLLTFFY) form a helical membrane-spanning segment. Residues 227-291 (KEETPYYLFE…RAMQIPSYRN (65 aa)) lie on the Cytoplasmic side of the membrane. The chain crosses the membrane as a helical span at residues 292 to 312 (VILLGCILSGLQQFTGINVLV). Alpha-D-glucose is bound by residues Q303, Q304, and N309. Residue Q303 participates in beta-D-glucose binding. N309 contacts beta-D-glucose. At 313-329 (SNSNELYKEFLSNKLIT) the chain is on the extracellular side. A helical transmembrane segment spans residues 330–350 (TLSVIMTVVNFLMTFPAIYIV). N339 contacts beta-D-glucose. Topologically, residues 351–356 (EKLGRK) are cytoplasmic. The chain crosses the membrane as a helical span at residues 357-377 (TLLLCGCAGVICAFLPTAIAN). Residues 378 to 390 (QIDSTSAFVKNLS) lie on the Extracellular side of the membrane. Residues 391-411 (IAATFVMIISFAVSYGPVLWI) traverse the membrane as a helical segment. W410 provides a ligand contact to alpha-D-glucose. Over 412 to 427 (YLHEMFPSEIKDSAAS) the chain is Cytoplasmic. A helical membrane pass occupies residues 428–448 (LASLVNWVCAIIVVFPSDIII). The Extracellular segment spans residues 449–453 (KKSPT). The chain crosses the membrane as a helical span at residues 454 to 474 (ILFFIFSGMSILSFLFIFFFI). Over 475 to 502 (KETKGGEIGTSPYITMEERQKHMGKSAV) the chain is Cytoplasmic.

Belongs to the major facilitator superfamily. Sugar transporter (TC 2.A.1.1) family. Homodimer.

The protein localises to the cell membrane. The enzyme catalyses D-glucose(out) = D-glucose(in). It catalyses the reaction D-fructose(out) = D-fructose(in). The catalysed reaction is D-galactose(in) = D-galactose(out). It carries out the reaction D-mannose(out) = D-mannose(in). The enzyme catalyses D-glucosamine(out) = D-glucosamine(in). It catalyses the reaction D-xylose(out) = D-xylose(in). Its activity is regulated as follows. Inhibited by compound 3361 (3-O-((undec-10-en)-1-yl)-D-glucose). Its function is as follows. Sodium-independent facilitative hexose transporter. Can transport D-glucose and D-fructose. Can transport D-mannose, D-galactose, D-xylose and D-glucosamine. In Plasmodium vivax (strain Brazil I), this protein is Hexose transporter 1.